We begin with the raw amino-acid sequence, 323 residues long: Phosphate acyltransferase (323 aa).

This sequence belongs to the PlsX family. In terms of assembly, homodimer. Probably interacts with PlsY.

It localises to the cytoplasm. The catalysed reaction is a fatty acyl-[ACP] + phosphate = an acyl phosphate + holo-[ACP]. It functions in the pathway lipid metabolism; phospholipid metabolism. Functionally, catalyzes the reversible formation of acyl-phosphate (acyl-PO(4)) from acyl-[acyl-carrier-protein] (acyl-ACP). This enzyme utilizes acyl-ACP as fatty acyl donor, but not acyl-CoA. This is Phosphate acyltransferase from Finegoldia magna (strain ATCC 29328 / DSM 20472 / WAL 2508) (Peptostreptococcus magnus).